The sequence spans 283 residues: Thymidylate synthase (283 aa).

Residue Arg-22 participates in dUMP binding. Catalysis depends on Cys-160, which acts as the Nucleophile. DUMP contacts are provided by residues 180 to 183, Asn-191, and 221 to 223; these read RSCD and HIY. Asp-183 contributes to the (6R)-5,10-methylene-5,6,7,8-tetrahydrofolate binding site. Ser-282 is a (6R)-5,10-methylene-5,6,7,8-tetrahydrofolate binding site.

It belongs to the thymidylate synthase family. Bacterial-type ThyA subfamily. In terms of assembly, homodimer.

It is found in the cytoplasm. The catalysed reaction is dUMP + (6R)-5,10-methylene-5,6,7,8-tetrahydrofolate = 7,8-dihydrofolate + dTMP. It functions in the pathway pyrimidine metabolism; dTTP biosynthesis. Functionally, catalyzes the reductive methylation of 2'-deoxyuridine-5'-monophosphate (dUMP) to 2'-deoxythymidine-5'-monophosphate (dTMP) while utilizing 5,10-methylenetetrahydrofolate (mTHF) as the methyl donor and reductant in the reaction, yielding dihydrofolate (DHF) as a by-product. This enzymatic reaction provides an intracellular de novo source of dTMP, an essential precursor for DNA biosynthesis. The chain is Thymidylate synthase from Vibrio cholerae serotype O1 (strain ATCC 39315 / El Tor Inaba N16961).